Reading from the N-terminus, the 84-residue chain is Sulfur carrier protein TusA (84 aa).

The active-site Cysteine persulfide intermediate is Cys19.

Belongs to the sulfur carrier protein TusA family. Interacts with IscS.

Its subcellular location is the cytoplasm. It participates in tRNA modification. In terms of biological role, sulfur carrier protein involved in sulfur trafficking in the cell. Part of a sulfur-relay system required for 2-thiolation during synthesis of 2-thiouridine of the modified wobble base 5-methylaminomethyl-2-thiouridine (mnm(5)s(2)U) in tRNA. Interacts with IscS and stimulates its cysteine desulfurase activity. Accepts an activated sulfur from IscS, which is then transferred to TusD, and thus determines the direction of sulfur flow from IscS to 2-thiouridine formation. Also appears to be involved in sulfur transfer for the biosynthesis of molybdopterin. In Yersinia pseudotuberculosis serotype O:1b (strain IP 31758), this protein is Sulfur carrier protein TusA.